A 228-amino-acid polypeptide reads, in one-letter code: 2,3-bisphosphoglycerate-dependent phosphoglycerate mutase (228 aa).

Substrate-binding positions include 8-15, 21-22, R60, 87-90, K98, 114-115, and 183-184; these read RHGQSVWN, TG, ERHY, RR, and GN. The Tele-phosphohistidine intermediate role is filled by H9. E87 acts as the Proton donor/acceptor in catalysis.

The protein belongs to the phosphoglycerate mutase family. BPG-dependent PGAM subfamily.

The enzyme catalyses (2R)-2-phosphoglycerate = (2R)-3-phosphoglycerate. It participates in carbohydrate degradation; glycolysis; pyruvate from D-glyceraldehyde 3-phosphate: step 3/5. Its function is as follows. Catalyzes the interconversion of 2-phosphoglycerate and 3-phosphoglycerate. In Staphylococcus carnosus (strain TM300), this protein is 2,3-bisphosphoglycerate-dependent phosphoglycerate mutase.